A 94-amino-acid chain; its full sequence is Acylphosphatase (94 aa).

In terms of domain architecture, Acylphosphatase-like spans alanine 7–glycine 94. Residues arginine 22 and asparagine 40 contribute to the active site.

The protein belongs to the acylphosphatase family.

It catalyses the reaction an acyl phosphate + H2O = a carboxylate + phosphate + H(+). This Rhizobium etli (strain ATCC 51251 / DSM 11541 / JCM 21823 / NBRC 15573 / CFN 42) protein is Acylphosphatase (acyP).